The following is a 236-amino-acid chain: Small ribosomal subunit protein uS2c (236 aa).

This sequence belongs to the universal ribosomal protein uS2 family.

It localises to the plastid. It is found in the chloroplast. In Physcomitrium patens (Spreading-leaved earth moss), this protein is Small ribosomal subunit protein uS2c (rps2).